The chain runs to 390 residues: Glutamyl-tRNA reductase (390 aa).

Residues 46 to 49 (TCNR), serine 96, 101 to 103 (EAQ), and glutamine 107 contribute to the substrate site. The Nucleophile role is filled by cysteine 47. 176 to 181 (GAGEMA) provides a ligand contact to NADP(+).

It belongs to the glutamyl-tRNA reductase family. As to quaternary structure, homodimer.

The catalysed reaction is (S)-4-amino-5-oxopentanoate + tRNA(Glu) + NADP(+) = L-glutamyl-tRNA(Glu) + NADPH + H(+). It participates in porphyrin-containing compound metabolism; protoporphyrin-IX biosynthesis; 5-aminolevulinate from L-glutamyl-tRNA(Glu): step 1/2. Its function is as follows. Catalyzes the NADPH-dependent reduction of glutamyl-tRNA(Glu) to glutamate 1-semialdehyde (GSA). This chain is Glutamyl-tRNA reductase, found in Thermus thermophilus (strain ATCC 27634 / DSM 579 / HB8).